We begin with the raw amino-acid sequence, 883 residues long: Alanine--tRNA ligase (883 aa).

Zn(2+) contacts are provided by His-563, His-567, Cys-677, and His-681.

Belongs to the class-II aminoacyl-tRNA synthetase family. Requires Zn(2+) as cofactor.

The protein localises to the cytoplasm. It catalyses the reaction tRNA(Ala) + L-alanine + ATP = L-alanyl-tRNA(Ala) + AMP + diphosphate. In terms of biological role, catalyzes the attachment of alanine to tRNA(Ala) in a two-step reaction: alanine is first activated by ATP to form Ala-AMP and then transferred to the acceptor end of tRNA(Ala). Also edits incorrectly charged Ser-tRNA(Ala) and Gly-tRNA(Ala) via its editing domain. The sequence is that of Alanine--tRNA ligase from Cereibacter sphaeroides (strain ATCC 17029 / ATH 2.4.9) (Rhodobacter sphaeroides).